The primary structure comprises 193 residues: Cytidylate kinase (193 aa).

12 to 20 (GLPGSGTTT) is a binding site for ATP.

Belongs to the cytidylate kinase family. Type 2 subfamily.

The protein localises to the cytoplasm. The catalysed reaction is CMP + ATP = CDP + ADP. It carries out the reaction dCMP + ATP = dCDP + ADP. This is Cytidylate kinase from Methanopyrus kandleri (strain AV19 / DSM 6324 / JCM 9639 / NBRC 100938).